We begin with the raw amino-acid sequence, 857 residues long: Putative disease resistance protein At1g50180 (857 aa).

Residues 27-60 (IGDQVKQLQDELKRLNCFLKDADEKQHESERVRN) are a coiled coil. An NB-ARC domain is found at 148–461 (SLREQRQSFP…AEGMVMPVKH (314 aa)). 192-199 (GMGGLGKT) is a binding site for ATP. 4 LRR repeats span residues 653–678 (MTSL…SLSK), 680–703 (LKRL…DVTQ), 754–780 (LPNL…NLEN), and 791–816 (MMRL…RFLK).

It belongs to the disease resistance NB-LRR family.

Potential disease resistance protein. The sequence is that of Putative disease resistance protein At1g50180 from Arabidopsis thaliana (Mouse-ear cress).